Here is a 58-residue protein sequence, read N- to C-terminus: Sec-independent protein translocase protein TatA (58 aa).

The helical transmembrane segment at 1–21 threads the bilayer; that stretch reads MLSNIGFPGLILILVAILILF.

Belongs to the TatA/E family. In terms of assembly, forms a complex with TatC.

It is found in the cell membrane. Part of the twin-arginine translocation (Tat) system that transports large folded proteins containing a characteristic twin-arginine motif in their signal peptide across membranes. TatA could form the protein-conducting channel of the Tat system. This chain is Sec-independent protein translocase protein TatA, found in Bacillus cytotoxicus (strain DSM 22905 / CIP 110041 / 391-98 / NVH 391-98).